A 325-amino-acid chain; its full sequence is MTKRVRLSDSFNPVYPYEDESTSQHPFINPGFISPNGFTQSPNGVLTLKCLTPLTTTGGSLQLKVGGGLTVDDTNGFLKENISATTPLVKTGHSIGLPLGAGLGTNENKLCIKLGQGLTFNSNNICIDDNINTLWTGVNPTEANCQIMNSSESNDCKLILTLVKTGALVTAFVYVIGVSNNFNMLTTHRNINFTAELFFDSTGNLLTRLSSLKTPLNHKSGQNMATGAITNAKGFMPSTTAYPFNDNSREKENYIYGTCYYTASDRTAFPIDISVMLNRRAINDETSYCIRITWSWNTGDAPEVQTSATTLVTSPFTFYYIREDD.

It belongs to the adenoviridae fiber family. Homotrimer. Interacts with host receptor CD46. Interacts (via N-terminal tail region) with pentons.

It localises to the virion. The protein localises to the host nucleus. Forms spikes that protrude from each vertex of the icosahedral capsid. Interacts with host receptor CD46 to provide virion initial attachment to target cell. Fiber proteins are shed during virus entry, when virus is still at the cell surface. The chain is Fiber protein from Human adenovirus B serotype 11 (strain Slobiski) (HAdV-11).